A 613-amino-acid polypeptide reads, in one-letter code: ATP-dependent zinc metalloprotease FtsH (613 aa).

Residues 1-4 (MVKN) lie on the Cytoplasmic side of the membrane. Residues 5–25 (LIFWLVITVVLMSVFQNFNSS) form a helical membrane-spanning segment. Over 26–98 (DTSNHRVDYS…VGEIPEEPSL (73 aa)) the chain is Extracellular. A helical membrane pass occupies residues 99–119 (LISIFISWFPMLLLIGVWIFF). Residues 120-613 (MRQMQMGGGK…WLEVDQKKDI (494 aa)) lie on the Cytoplasmic side of the membrane. 192-199 (GPPGTGKT) is a binding site for ATP. H414 provides a ligand contact to Zn(2+). Residue E415 is part of the active site. Residues H418 and D492 each contribute to the Zn(2+) site.

It in the central section; belongs to the AAA ATPase family. In the C-terminal section; belongs to the peptidase M41 family. In terms of assembly, homohexamer. Zn(2+) is required as a cofactor.

Its subcellular location is the cell membrane. Its function is as follows. Acts as a processive, ATP-dependent zinc metallopeptidase for both cytoplasmic and membrane proteins. Plays a role in the quality control of integral membrane proteins. In Buchnera aphidicola subsp. Schizaphis graminum (strain Sg), this protein is ATP-dependent zinc metalloprotease FtsH.